We begin with the raw amino-acid sequence, 206 residues long: FMN-dependent NADH:quinone oxidoreductase 2 (206 aa).

Ser-10 lines the FMN pocket.

Belongs to the azoreductase type 1 family. Homodimer. FMN is required as a cofactor.

The catalysed reaction is 2 a quinone + NADH + H(+) = 2 a 1,4-benzosemiquinone + NAD(+). The enzyme catalyses N,N-dimethyl-1,4-phenylenediamine + anthranilate + 2 NAD(+) = 2-(4-dimethylaminophenyl)diazenylbenzoate + 2 NADH + 2 H(+). Its function is as follows. Quinone reductase that provides resistance to thiol-specific stress caused by electrophilic quinones. In terms of biological role, also exhibits azoreductase activity. Catalyzes the reductive cleavage of the azo bond in aromatic azo compounds to the corresponding amines. This chain is FMN-dependent NADH:quinone oxidoreductase 2, found in Rhizobium etli (strain ATCC 51251 / DSM 11541 / JCM 21823 / NBRC 15573 / CFN 42).